An 86-amino-acid polypeptide reads, in one-letter code: Small ribosomal subunit protein bS16 (86 aa).

Belongs to the bacterial ribosomal protein bS16 family.

This is Small ribosomal subunit protein bS16 from Stenotrophomonas maltophilia (strain K279a).